Consider the following 346-residue polypeptide: Methylthioribose-1-phosphate isomerase (346 aa).

Substrate-binding positions include 46–48 (RGA), R89, and Q196. The active-site Proton donor is D237. 247–248 (NK) contributes to the substrate binding site.

This sequence belongs to the eIF-2B alpha/beta/delta subunits family. MtnA subfamily.

The catalysed reaction is 5-(methylsulfanyl)-alpha-D-ribose 1-phosphate = 5-(methylsulfanyl)-D-ribulose 1-phosphate. Its pathway is amino-acid biosynthesis; L-methionine biosynthesis via salvage pathway; L-methionine from S-methyl-5-thio-alpha-D-ribose 1-phosphate: step 1/6. Its function is as follows. Catalyzes the interconversion of methylthioribose-1-phosphate (MTR-1-P) into methylthioribulose-1-phosphate (MTRu-1-P). This Geotalea daltonii (strain DSM 22248 / JCM 15807 / FRC-32) (Geobacter daltonii) protein is Methylthioribose-1-phosphate isomerase.